Reading from the N-terminus, the 122-residue chain is Large ribosomal subunit protein uL14 (122 aa).

The protein belongs to the universal ribosomal protein uL14 family. As to quaternary structure, part of the 50S ribosomal subunit. Forms a cluster with proteins L3 and L19. In the 70S ribosome, L14 and L19 interact and together make contacts with the 16S rRNA in bridges B5 and B8.

In terms of biological role, binds to 23S rRNA. Forms part of two intersubunit bridges in the 70S ribosome. The chain is Large ribosomal subunit protein uL14 from Bacillus licheniformis (strain ATCC 14580 / DSM 13 / JCM 2505 / CCUG 7422 / NBRC 12200 / NCIMB 9375 / NCTC 10341 / NRRL NRS-1264 / Gibson 46).